The sequence spans 366 residues: Phospho-N-acetylmuramoyl-pentapeptide-transferase (366 aa).

The next 10 helical transmembrane spans lie at 27-47, 71-91, 93-113, 134-154, 174-194, 205-225, 245-265, 268-288, 294-314, and 343-363; these read AALF…INSL, TPTM…LLWA, LSNV…AIGF, LGIE…TALA, FLIN…VGAG, GLAI…AYLA, LAVV…FNAP, AIFM…TVAV, IVMA…IIQV, and QVVI…LSTL.

Belongs to the glycosyltransferase 4 family. MraY subfamily. Requires Mg(2+) as cofactor.

Its subcellular location is the cell inner membrane. The enzyme catalyses UDP-N-acetyl-alpha-D-muramoyl-L-alanyl-gamma-D-glutamyl-meso-2,6-diaminopimeloyl-D-alanyl-D-alanine + di-trans,octa-cis-undecaprenyl phosphate = di-trans,octa-cis-undecaprenyl diphospho-N-acetyl-alpha-D-muramoyl-L-alanyl-D-glutamyl-meso-2,6-diaminopimeloyl-D-alanyl-D-alanine + UMP. It participates in cell wall biogenesis; peptidoglycan biosynthesis. Its function is as follows. Catalyzes the initial step of the lipid cycle reactions in the biosynthesis of the cell wall peptidoglycan: transfers peptidoglycan precursor phospho-MurNAc-pentapeptide from UDP-MurNAc-pentapeptide onto the lipid carrier undecaprenyl phosphate, yielding undecaprenyl-pyrophosphoryl-MurNAc-pentapeptide, known as lipid I. In Rhizobium etli (strain CIAT 652), this protein is Phospho-N-acetylmuramoyl-pentapeptide-transferase.